The sequence spans 523 residues: GMP synthase [glutamine-hydrolyzing] (523 aa).

Residues 8 to 205 (KILILDFGSQ…VVGICGCECK (198 aa)) enclose the Glutamine amidotransferase type-1 domain. Cys85 acts as the Nucleophile in catalysis. Residues His179 and Glu181 contribute to the active site. The GMPS ATP-PPase domain maps to 206-398 (WTAENIIEDA…LGLPAEMLNR (193 aa)). 233 to 239 (SGGVDSS) is an ATP binding site.

Homodimer.

It carries out the reaction XMP + L-glutamine + ATP + H2O = GMP + L-glutamate + AMP + diphosphate + 2 H(+). Its pathway is purine metabolism; GMP biosynthesis; GMP from XMP (L-Gln route): step 1/1. Its function is as follows. Catalyzes the synthesis of GMP from XMP. This chain is GMP synthase [glutamine-hydrolyzing], found in Actinobacillus pleuropneumoniae serotype 3 (strain JL03).